The primary structure comprises 403 residues: Na(+)/H(+) antiporter NhaH (403 aa).

The next 12 membrane-spanning stretches (helical) occupy residues 7–27 (VFIQ…IAKL), 34–54 (VALV…IEEA), 99–119 (LAFL…YFLL), 125–145 (VAFT…LSIF), 168–188 (IAVV…EMGW), 196–216 (FMFL…GYVF), 228–245 (LEVA…FIAE), 250–272 (SGVI…IGMS), 282–302 (FWDS…GLEI), 311–331 (WGYI…AVYI), 345–365 (ILIN…LSLP), and 373–393 (QVLL…GLTL).

The protein belongs to the monovalent cation:proton antiporter 1 (CPA1) transporter (TC 2.A.36) family.

Its subcellular location is the cell membrane. Its function is as follows. Na(+)/H(+) antiporter that extrudes sodium in exchange for external protons. Can also transport lithium. This is Na(+)/H(+) antiporter NhaH (nhaH) from Halobacillus aidingensis.